The sequence spans 496 residues: NAD(P)H-quinone oxidoreductase subunit 2, chloroplastic (496 aa).

14 helical membrane-spanning segments follow: residues 14–34 (SFLP…LDLV), 42–62 (MLVK…IQQW), 79–99 (FTTC…PLSF), 109–129 (LTEF…LSSA), 133–153 (ITIF…TGYV), 167–187 (LIIG…LYGL), 210–230 (LASW…LSLV), 244–264 (PTPV…ALTI), 281–301 (ILQI…MVET), 305–325 (RILT…IVAG), 334–354 (LVYM…IILF), 377–397 (ASCL…TGFF), 400–420 (ILLF…TGIF), and 469–489 (IYLC…VIYF).

Belongs to the complex I subunit 2 family. NDH is composed of at least 16 different subunits, 5 of which are encoded in the nucleus.

Its subcellular location is the plastid. It localises to the chloroplast thylakoid membrane. It catalyses the reaction a plastoquinone + NADH + (n+1) H(+)(in) = a plastoquinol + NAD(+) + n H(+)(out). It carries out the reaction a plastoquinone + NADPH + (n+1) H(+)(in) = a plastoquinol + NADP(+) + n H(+)(out). Its function is as follows. NDH shuttles electrons from NAD(P)H:plastoquinone, via FMN and iron-sulfur (Fe-S) centers, to quinones in the photosynthetic chain and possibly in a chloroplast respiratory chain. The immediate electron acceptor for the enzyme in this species is believed to be plastoquinone. Couples the redox reaction to proton translocation, and thus conserves the redox energy in a proton gradient. In Chara vulgaris (Common stonewort), this protein is NAD(P)H-quinone oxidoreductase subunit 2, chloroplastic.